Here is a 146-residue protein sequence, read N- to C-terminus: MRNEMNLQFSALSQNESFARVHRAAFIAQLDPTMEELTEIKTVVSEAVTNAIIHGYEGNAEGIVYISVILEEAMVKLTIRDEGIGIFNLDEARQPLFTTKPELERSGMGFTIMENFMDEVEVISNESFGTTIHLTKYLSNSNALCN.

The protein belongs to the anti-sigma-factor family.

It catalyses the reaction L-seryl-[protein] + ATP = O-phospho-L-seryl-[protein] + ADP + H(+). The enzyme catalyses L-threonyl-[protein] + ATP = O-phospho-L-threonyl-[protein] + ADP + H(+). In terms of biological role, binds to sigma F and blocks its ability to form an RNA polymerase holoenzyme (E-sigma F). Phosphorylates SpoIIAA on a serine residue. This phosphorylation may enable SpoIIAA to act as an anti-anti-sigma factor that counteracts SpoIIAB and thus releases sigma F from inhibition. The chain is Anti-sigma F factor from Bacillus cereus (strain ATCC 14579 / DSM 31 / CCUG 7414 / JCM 2152 / NBRC 15305 / NCIMB 9373 / NCTC 2599 / NRRL B-3711).